The chain runs to 182 residues: Ribosome maturation factor RimM (182 aa).

The PRC barrel domain maps to 102–182 (EEGDYYWKDL…TIEVDWDPGF (81 aa)).

This sequence belongs to the RimM family. As to quaternary structure, binds ribosomal protein uS19.

The protein resides in the cytoplasm. Functionally, an accessory protein needed during the final step in the assembly of 30S ribosomal subunit, possibly for assembly of the head region. Essential for efficient processing of 16S rRNA. May be needed both before and after RbfA during the maturation of 16S rRNA. It has affinity for free ribosomal 30S subunits but not for 70S ribosomes. In Salmonella gallinarum (strain 287/91 / NCTC 13346), this protein is Ribosome maturation factor RimM.